The chain runs to 666 residues: ATP-dependent zinc metalloprotease FtsH (666 aa).

Residues 1-23 (MSREVTSGLPQDKPTGSAPPPPP) are disordered. Over 1 to 27 (MSREVTSGLPQDKPTGSAPPPPPPWRR) the chain is Cytoplasmic. Residues 28–48 (WLLPIGLLVSLVLLFTFPMRP) traverse the membrane as a helical segment. The Extracellular portion of the chain corresponds to 49-125 (SSGKTLTYSE…RPPGPSLASQ (77 aa)). Residues 126–146 (VLAGVLSFLPFLLLLGLFAYS) form a helical membrane-spanning segment. Residues 147–666 (GRRAGAGFLA…RTAASSDDLL (520 aa)) lie on the Cytoplasmic side of the membrane. An ATP-binding site is contributed by 219–226 (GPPGTGKT). A Zn(2+)-binding site is contributed by H442. Residue E443 is part of the active site. Residues H446 and D518 each coordinate Zn(2+). The interval 626–666 (PEEHREAAARHVRRPGIAAATGASMAGGSEPRTAASSDDLL) is disordered. Low complexity predominate over residues 641 to 653 (GIAAATGASMAGG).

It in the central section; belongs to the AAA ATPase family. The protein in the C-terminal section; belongs to the peptidase M41 family. Homohexamer. Zn(2+) serves as cofactor.

The protein localises to the cell membrane. In terms of biological role, acts as a processive, ATP-dependent zinc metallopeptidase for both cytoplasmic and membrane proteins. Plays a role in the quality control of integral membrane proteins. In Acidothermus cellulolyticus (strain ATCC 43068 / DSM 8971 / 11B), this protein is ATP-dependent zinc metalloprotease FtsH.